We begin with the raw amino-acid sequence, 364 residues long: Putative acetyl-CoA C-acetyltransferase YhfS (364 aa).

The Acyl-thioester intermediate role is filled by Cys-82. The active-site Proton acceptor is His-318.

The protein belongs to the thiolase-like superfamily. Thiolase family.

Functionally, may be involved in fatty acid metabolism. The sequence is that of Putative acetyl-CoA C-acetyltransferase YhfS (yhfS) from Bacillus subtilis (strain 168).